We begin with the raw amino-acid sequence, 296 residues long: Formylmethanofuran--tetrahydromethanopterin formyltransferase (296 aa).

This sequence belongs to the FTR family. In terms of assembly, homotetramer composed of two dimers. Dimerization is sufficient for enzyme activity, but tetramerization is required for high thermostability.

The protein localises to the cytoplasm. The enzyme catalyses N-formylmethanofuran + 5,6,7,8-tetrahydromethanopterin + H(+) = N(5)-formyl-5,6,7,8-tetrahydromethanopterin + methanofuran. The protein operates within one-carbon metabolism; methanogenesis from CO(2); 5,10-methenyl-5,6,7,8-tetrahydromethanopterin from CO(2): step 2/3. Its activity is regulated as follows. Requires high salt concentrations for activity and thermostability; 1.5-1.8 M KH(2)PO(4) stimulates activity while stabilizing the enzyme. Catalyzes the reversible transfer of a formyl group from formylmethanofuran (formyl-MFR) to tetrahydromethanopterin (H(4)MPT) to produce 5-formyl tetrahydromethanopterin (5-formyl-H(4)MPT) and methanofuran (MFR). Acts via a ternary-complex mechanism. Uses N-furfurylformamide much less efficiently, does not use N-methylformamide or formamide. Protein overexpressed in E.coli has very similar properties to enzyme purified from M.kandleri. The polypeptide is Formylmethanofuran--tetrahydromethanopterin formyltransferase (Methanopyrus kandleri (strain AV19 / DSM 6324 / JCM 9639 / NBRC 100938)).